We begin with the raw amino-acid sequence, 558 residues long: MAGLRVLLCLGALLARQGSAGLQLLLNPSRANLSVRPNSEVLPGIHPDLEAVAIGEVHDNVTLRCGSASGSRGLVTWYRNDSEPAFLVSFNSSLPPAAPRFSLEDAGALRIEALRLEDDGNYTCQEVLNETHWFPVRLRVASGPAYVEVNISATGTLPNGTLYAARGSQVDFNCCSAAQPPPEVEWWIQTHSIPEFLGKNLSANSFTLMLMSQNLQGNYTCSATNVLSGRQRKVTTELLVYWPPPSAPQCSVEVSSESTTLELACNWDGGYPDPTFLWTEEPGGTIMGNSKLQTLSPAQLLEGKKFKCVGNHILGPESGASCVVKLSSPLLPSQPMRTCFVGGNVTLTCEVSGANPPARIQWLRNLTQPAIQPSSHYIITQQGQSSSLTIHNCSQDLDEGFYYCQAENLVGVRATNIWLSVKEPLNIGGIVGTVVSLLLLGLAVVSGLTLYYSPAFWWKGGSTFRGQDMGDVMVLVDSEEEEEEEEEEEEKEDVAEEVEQETNETEELPKGISKHGHIHRVTALVNGNLDRMGNGFQEFQDDSDGQQSGIVQEDGKPV.

A signal peptide spans Met-1 to Ala-20. Topologically, residues Gly-21–Asn-426 are extracellular. Residues Asn-32, Asn-60, Asn-121, Asn-150, Asn-159, and Asn-218 are each glycosylated (N-linked (GlcNAc...) asparagine). 4 consecutive Ig-like C2-type domains span residues Pro-37–Val-140, Pro-144–Thr-235, Pro-248–Ser-327, and Pro-332–Ser-420. Cys-65 and Cys-124 are oxidised to a cystine. 2 cysteine pairs are disulfide-bonded: Cys-174/Cys-221 and Cys-265/Cys-308. N-linked (GlcNAc...) asparagine glycosylation occurs at Asn-344. Cysteines 349 and 404 form a disulfide. The helical transmembrane segment at Ile-427 to Gly-447 threads the bilayer. At Leu-448–Val-558 the chain is on the cytoplasmic side. Positions Asp-477–Glu-506 are enriched in acidic residues. Disordered regions lie at residues Asp-477–His-515 and Met-532–Val-558.

The protein resides in the membrane. In Mus musculus (Mouse), this protein is V-set and immunoglobulin domain-containing protein 10 (Vsig10).